We begin with the raw amino-acid sequence, 509 residues long: Angiopoietin-4 (509 aa).

Positions 1–21 are cleaved as a signal peptide; it reads MLCQPAMLLDGLLLLATMAAA. Residues asparagine 105, asparagine 135, asparagine 149, asparagine 167, asparagine 256, asparagine 306, asparagine 317, and asparagine 417 are each glycosylated (N-linked (GlcNAc...) asparagine). Residues 181-269 are a coiled coil; sequence LSTNKLERQM…LQQQQQQLTE (89 aa). Positions 288–508 constitute a Fibrinogen C-terminal domain; that stretch reads KTPKPVFQDC…GTRMMLRPMG (221 aa). A disulfide bridge links cysteine 297 with cysteine 326. The tract at residues 416–436 is disordered; that stretch reads VNDSSSSAGRKNSLAPQGTKF. The cysteines at positions 450 and 463 are disulfide-linked.

In terms of assembly, homodimer; disulfide-linked. Interacts with TEK/TIE2. Widely expressed.

The protein resides in the secreted. In terms of biological role, binds to TEK/TIE2, modulating ANGPT1 signaling. Can induce tyrosine phosphorylation of TEK/TIE2. Promotes endothelial cell survival, migration and angiogenesis. The sequence is that of Angiopoietin-4 (Angpt4) from Mus musculus (Mouse).